Reading from the N-terminus, the 274-residue chain is D-aminoacyl-tRNA deacylase (274 aa).

It belongs to the DtdA deacylase family. In terms of assembly, monomer. The cofactor is Zn(2+).

It catalyses the reaction a D-aminoacyl-tRNA + H2O = a tRNA + a D-alpha-amino acid + H(+). The enzyme catalyses glycyl-tRNA(Ala) + H2O = tRNA(Ala) + glycine + H(+). In terms of biological role, D-aminoacyl-tRNA deacylase with broad substrate specificity. By recycling D-aminoacyl-tRNA to D-amino acids and free tRNA molecules, this enzyme counteracts the toxicity associated with the formation of D-aminoacyl-tRNA entities in vivo. This chain is D-aminoacyl-tRNA deacylase, found in Pyrococcus horikoshii (strain ATCC 700860 / DSM 12428 / JCM 9974 / NBRC 100139 / OT-3).